We begin with the raw amino-acid sequence, 481 residues long: Molybdate-anion transporter (481 aa).

Helical transmembrane passes span 1 to 21 (MFVTAYLAFIVLAGLCVALEI), 47 to 67 (LFLKAYLLALWADWLQGPYLY), 80 to 100 (IAILYVCGLASCVLFAPVAGW), 131 to 151 (FMLILGRVLGGLSTSLLTTTF), 180 to 200 (WNYGLAVGAGLVANLFAEWLG), 201 to 221 (LGPVAPFLLAIPSLAACAWFV), 276 to 296 (VMLLGGVQALFESVLYIFVFL), 306 to 326 (PPLGIVFSSLMAATMAGSTLF), 341 to 361 (LLCLAILLAFFSFFMLTFSTV), 371 to 391 (LLAFLLLELACGLYFPAVSFL), 403 to 423 (AVLAWFRLPLHLLACLGLLAL), and 443 to 463 (FAGCAGMMLAALLAVISLFTV).

It belongs to the major facilitator superfamily.

The protein localises to the cell membrane. In terms of biological role, mediates high-affinity intracellular uptake of the rare oligo-element molybdenum. The sequence is that of Molybdate-anion transporter (mfsd5) from Danio rerio (Zebrafish).